A 150-amino-acid polypeptide reads, in one-letter code: MKLILTAAVENLGAPGEIVEVKDGYGRNYLLPRGLAIVATRGAEKQIEGIKRAQEARAIRDLDHAREIRTQLEELKDVNVPVKTSESGKLFGSVSAEDIVNAVAAAGGPKLDKRIVVLPKGLVKKTGNYQVELKLHADVIGKVNFSVVAA.

The protein belongs to the bacterial ribosomal protein bL9 family.

Binds to the 23S rRNA. This Corynebacterium aurimucosum (strain ATCC 700975 / DSM 44827 / CIP 107346 / CN-1) (Corynebacterium nigricans) protein is Large ribosomal subunit protein bL9.